The sequence spans 115 residues: Na(+)/H(+) antiporter subunit C1 (115 aa).

3 helical membrane-spanning segments follow: residues 1 to 21 (MEII…YLVL), 28 to 48 (IIMG…TMGG), and 72 to 92 (LILT…VLAF).

It belongs to the CPA3 antiporters (TC 2.A.63) subunit C family. May form a heterooligomeric complex that consists of seven subunits: mnhA1, mnhB1, mnhC1, mnhD1, mnhE1, mnhF1 and mnhG1.

The protein localises to the cell membrane. In terms of biological role, mnh complex is a Na(+)/H(+) antiporter involved in Na(+) excretion. The sequence is that of Na(+)/H(+) antiporter subunit C1 (mnhC1) from Staphylococcus epidermidis (strain ATCC 35984 / DSM 28319 / BCRC 17069 / CCUG 31568 / BM 3577 / RP62A).